A 265-amino-acid polypeptide reads, in one-letter code: Nitrogenase vanadium-iron protein alpha chain (265 aa).

[8Fe-7S] cluster is bound by residues cysteine 17 and cysteine 80. Cysteine 199 contributes to the [7Fe-V-9S-C-homocitryl] cluster binding site.

The protein belongs to the NifD/NifK/NifE/NifN family. As to quaternary structure, hexamer of two alpha, two beta, and two delta chains. [8Fe-7S] cluster is required as a cofactor. [7Fe-V-9S-C-homocitryl] cluster serves as cofactor.

It carries out the reaction N2 + 8 reduced [2Fe-2S]-[ferredoxin] + 16 ATP + 16 H2O = H2 + 8 oxidized [2Fe-2S]-[ferredoxin] + 2 NH4(+) + 16 ADP + 16 phosphate + 6 H(+). Its function is as follows. This vanadium-iron protein is part of the nitrogenase complex that catalyzes the key enzymatic reactions in nitrogen fixation. In Azorhizophilus paspali (Azotobacter paspali), this protein is Nitrogenase vanadium-iron protein alpha chain (vnfD).